The primary structure comprises 905 residues: Transcriptional regulator MNL1 (905 aa).

Positions 1 to 29 are enriched in polar residues; sequence MDSHNNIDQSVSELLSDPASVQQSYNSQL. Disordered stretches follow at residues 1 to 34, 312 to 340, 383 to 419, 434 to 460, 525 to 544, 584 to 613, 625 to 671, and 685 to 733; these read MDSH…GPEF, QTQA…ASHT, MDQV…NARY, SEKN…NLLS, TKEE…KPKR, NISS…SESS, NVGK…GTVE, and PASE…TSST. The segment covering 312-334 has biased composition (low complexity); it reads QTQAQAQAHQQQQQQSQQQHSPQ. Positions 439 to 460 are enriched in low complexity; the sequence is NHNNRSPPTPPTSTSSPQNLLS. Residues 584–598 are compositionally biased toward polar residues; that stretch reads NISSHHSSGTPSITT. A compositionally biased stretch (basic residues) spans 628 to 639; that stretch reads KRKNKSYRKPKG. Low complexity-rich tracts occupy residues 647–669 and 690–710; these read QQQQ…STGT and SSLL…EASS. C2H2-type zinc fingers lie at residues 832–855 and 861–883; these read YLCN…RSLH and YNCD…LKIH. Residues 885–905 are disordered; the sequence is QEDEKDCADAETGVGMDDASG.

It is found in the nucleus. Its function is as follows. Transcription factor that activates stress response genes via SLE (STRE-like) elements. Required for adaptation to weak acid stress such as acetic acid stress, but seems not involved in the response to heat, osmotic, ethanol, nutrient, oxidative, or heavy-metal stress. Activates a subset of the genes that are repressed by NRG1. The sequence is that of Transcriptional regulator MNL1 (MNL1) from Candida albicans (strain SC5314 / ATCC MYA-2876) (Yeast).